The primary structure comprises 308 residues: Pantothenate kinase (308 aa).

Residue 93–100 (GSVAVGKS) coordinates ATP.

The protein belongs to the prokaryotic pantothenate kinase family.

The protein localises to the cytoplasm. It catalyses the reaction (R)-pantothenate + ATP = (R)-4'-phosphopantothenate + ADP + H(+). The protein operates within cofactor biosynthesis; coenzyme A biosynthesis; CoA from (R)-pantothenate: step 1/5. The polypeptide is Pantothenate kinase (Corynebacterium aurimucosum (strain ATCC 700975 / DSM 44827 / CIP 107346 / CN-1) (Corynebacterium nigricans)).